A 445-amino-acid chain; its full sequence is Probable phosphoglucosamine mutase (445 aa).

The Phosphoserine intermediate role is filled by serine 99. Mg(2+)-binding residues include serine 99, aspartate 238, aspartate 240, and aspartate 242. Serine 99 is subject to Phosphoserine.

It belongs to the phosphohexose mutase family. The cofactor is Mg(2+). In terms of processing, activated by phosphorylation.

The enzyme catalyses alpha-D-glucosamine 1-phosphate = D-glucosamine 6-phosphate. Its function is as follows. Catalyzes the conversion of glucosamine-6-phosphate to glucosamine-1-phosphate. The polypeptide is Probable phosphoglucosamine mutase (Methanobrevibacter smithii (strain ATCC 35061 / DSM 861 / OCM 144 / PS)).